Reading from the N-terminus, the 667-residue chain is Autophagy-related protein 20 (667 aa).

Residues 1–94 are disordered; it reads MKQKKNRFGS…DESFKSTRAN (94 aa). A compositionally biased stretch (low complexity) spans 38–47; the sequence is SSSSRSSSTQ. A compositionally biased stretch (polar residues) spans 55–67; the sequence is SLASVHTSDMHQS. The segment covering 76–85 has biased composition (acidic residues); sequence DDNPFLDQDD. The 147-residue stretch at 185–331 folds into the PX domain; sequence KLINDRVQIL…DFLDPNNINW (147 aa). A 1,2-diacyl-sn-glycero-3-phospho-(1D-myo-inositol-3-phosphate)-binding residues include Arg-222, Ser-224, Lys-248, and Arg-297. Positions 524-562 are disordered; it reads ELQRGVQPRNGNTASGASGNDESSVKKPQASKSQSSSYG. Positions 532-545 are enriched in polar residues; sequence RNGNTASGASGNDE. The segment covering 549-560 has biased composition (low complexity); sequence KKPQASKSQSSS. Residues 588-652 adopt a coiled-coil conformation; sequence QTTMANLIKE…SKYLKDYAKK (65 aa).

The protein belongs to the sorting nexin family.

It localises to the endosome membrane. It is found in the preautophagosomal structure membrane. Required for cytoplasm to vacuole transport (Cvt), pexophagy and mitophagy. Also involved in endoplasmic reticulum-specific autophagic process and is essential for the survival of cells subjected to severe ER stress. Functions in protein retrieval from the endocytic pathway. The protein is Autophagy-related protein 20 (ATG20) of Vanderwaltozyma polyspora (strain ATCC 22028 / DSM 70294 / BCRC 21397 / CBS 2163 / NBRC 10782 / NRRL Y-8283 / UCD 57-17) (Kluyveromyces polysporus).